The following is a 199-amino-acid chain: Recombination protein RecR (199 aa).

Residues 57–72 (CNLCNNFSEQEICPLC) form a C4-type zinc finger. The 96-residue stretch at 80–175 (TLLCIVEMPS…QVSRIARGLP (96 aa)) folds into the Toprim domain.

Belongs to the RecR family.

In terms of biological role, may play a role in DNA repair. It seems to be involved in an RecBC-independent recombinational process of DNA repair. It may act with RecF and RecO. This Methylobacillus flagellatus (strain ATCC 51484 / DSM 6875 / VKM B-1610 / KT) protein is Recombination protein RecR.